The following is a 180-amino-acid chain: Large ribosomal subunit protein uL5 (180 aa).

The protein belongs to the universal ribosomal protein uL5 family. Part of the 50S ribosomal subunit; part of the 5S rRNA/L5/L18/L25 subcomplex. Contacts the 5S rRNA and the P site tRNA. Forms a bridge to the 30S subunit in the 70S ribosome.

Functionally, this is one of the proteins that bind and probably mediate the attachment of the 5S RNA into the large ribosomal subunit, where it forms part of the central protuberance. In the 70S ribosome it contacts protein S13 of the 30S subunit (bridge B1b), connecting the 2 subunits; this bridge is implicated in subunit movement. Contacts the P site tRNA; the 5S rRNA and some of its associated proteins might help stabilize positioning of ribosome-bound tRNAs. The polypeptide is Large ribosomal subunit protein uL5 (Oenococcus oeni (strain ATCC BAA-331 / PSU-1)).